The following is a 224-amino-acid chain: UPF0758 protein Bpro_0948 (224 aa).

The MPN domain maps to 102-224; it reads LFSTPQAVRD…AVSMAELGLL (123 aa). Positions 173, 175, and 186 each coordinate Zn(2+). The JAMM motif motif lies at 173–186; it reads HNHPSGAATPSRAD.

The protein belongs to the UPF0758 family.

This Polaromonas sp. (strain JS666 / ATCC BAA-500) protein is UPF0758 protein Bpro_0948.